We begin with the raw amino-acid sequence, 361 residues long: Isocitrate dehydrogenase [NAD] subunit 1, mitochondrial (361 aa).

A mitochondrion-targeting transit peptide spans 1 to 12 (MLRQGIAAQKKS). Substrate contacts are provided by arginine 110, arginine 141, and aspartate 229. Aspartate 229 provides a ligand contact to Mg(2+).

The protein belongs to the isocitrate and isopropylmalate dehydrogenases family. Octamer of two non-identical subunits IDH1 and IDH2. Mg(2+) is required as a cofactor. It depends on Mn(2+) as a cofactor.

The protein resides in the mitochondrion. It catalyses the reaction D-threo-isocitrate + NAD(+) = 2-oxoglutarate + CO2 + NADH. Functionally, performs an essential role in the oxidative function of the citric acid cycle. This chain is Isocitrate dehydrogenase [NAD] subunit 1, mitochondrial (IDH1), found in Kluyveromyces lactis (strain ATCC 8585 / CBS 2359 / DSM 70799 / NBRC 1267 / NRRL Y-1140 / WM37) (Yeast).